Here is a 419-residue protein sequence, read N- to C-terminus: GTPase Obg (419 aa).

The Obg domain occupies 1-156 (MFIDKVNTYL…AEVNLELRLI (156 aa)). The region spanning 157–325 (ADVGLLGLPN…LLKEMLRMLE (169 aa)) is the OBG-type G domain. GTP is bound by residues 163 to 170 (GLPNAGKS), 188 to 192 (FTTLA), 209 to 212 (DIPG), 279 to 282 (NKID), and 306 to 308 (SAA). S170 and T190 together coordinate Mg(2+). In terms of domain architecture, OCT spans 342–419 (KKYIYEPEFK…IGDFEFTFEK (78 aa)).

Belongs to the TRAFAC class OBG-HflX-like GTPase superfamily. OBG GTPase family. As to quaternary structure, monomer. Requires Mg(2+) as cofactor.

The protein resides in the cytoplasm. Functionally, an essential GTPase which binds GTP, GDP and possibly (p)ppGpp with moderate affinity, with high nucleotide exchange rates and a fairly low GTP hydrolysis rate. Plays a role in control of the cell cycle, stress response, ribosome biogenesis and in those bacteria that undergo differentiation, in morphogenesis control. In Endomicrobium trichonymphae, this protein is GTPase Obg.